Here is a 204-residue protein sequence, read N- to C-terminus: Somatotropin (204 aa).

The N-terminal stretch at 1–17 (MDRVVLLLSVLSLGVSS) is a signal peptide. A Pyrrolidone carboxylic acid modification is found at Q18. Disulfide bonds link C69/C177 and C194/C202.

This sequence belongs to the somatotropin/prolactin family.

It is found in the secreted. Growth hormone plays an important role in growth control and is involved in the regulation of several anabolic processes. Implicated as an osmoregulatory substance important for seawater adaptation. This is Somatotropin (gh) from Seriola quinqueradiata (Five-ray yellowtail).